Consider the following 298-residue polypeptide: ATP synthase gamma chain (298 aa).

This sequence belongs to the ATPase gamma chain family. In terms of assembly, F-type ATPases have 2 components, CF(1) - the catalytic core - and CF(0) - the membrane proton channel. CF(1) has five subunits: alpha(3), beta(3), gamma(1), delta(1), epsilon(1). CF(0) has three main subunits: a, b and c.

The protein localises to the cell inner membrane. Produces ATP from ADP in the presence of a proton gradient across the membrane. The gamma chain is believed to be important in regulating ATPase activity and the flow of protons through the CF(0) complex. The chain is ATP synthase gamma chain from Acidithiobacillus ferridurans.